A 79-amino-acid chain; its full sequence is Acyl carrier protein (79 aa).

One can recognise a Carrier domain in the interval 1–77; the sequence is MNNVEKKIKK…KSIDYINNKN (77 aa). Ser37 carries the O-(pantetheine 4'-phosphoryl)serine modification.

The protein belongs to the acyl carrier protein (ACP) family. Post-translationally, 4'-phosphopantetheine is transferred from CoA to a specific serine of apo-ACP by AcpS. This modification is essential for activity because fatty acids are bound in thioester linkage to the sulfhydryl of the prosthetic group.

The protein resides in the cytoplasm. It functions in the pathway lipid metabolism; fatty acid biosynthesis. Carrier of the growing fatty acid chain in fatty acid biosynthesis. In Buchnera aphidicola subsp. Schizaphis graminum (strain Sg), this protein is Acyl carrier protein.